Here is a 741-residue protein sequence, read N- to C-terminus: Ion-translocating oxidoreductase complex subunit C (741 aa).

4Fe-4S ferredoxin-type domains are found at residues 369–397 (GEPQ…QQLY) and 407–436 (KATT…VQYF). The [4Fe-4S] cluster site is built by C377, C380, C383, C387, C416, C419, C422, and C426. Positions 627–654 (IARAKARKLEQQQQANAEPEEQVDPRKA) are disordered.

This sequence belongs to the 4Fe4S bacterial-type ferredoxin family. RnfC subfamily. In terms of assembly, the complex is composed of six subunits: RsxA, RsxB, RsxC, RsxD, RsxE and RsxG. The cofactor is [4Fe-4S] cluster.

It localises to the cell inner membrane. Functionally, part of a membrane-bound complex that couples electron transfer with translocation of ions across the membrane. Required to maintain the reduced state of SoxR. This is Ion-translocating oxidoreductase complex subunit C from Escherichia coli O127:H6 (strain E2348/69 / EPEC).